Here is a 239-residue protein sequence, read N- to C-terminus: Cysteine-rich venom protein ophanin (239 aa).

Residues 1–18 form the signal peptide; that stretch reads MIAFTLLSLAAVLQQSFG. Residues 37–165 form the SCP domain; that stretch reads VDLHNSLRRS…EYSYFYVCQY (129 aa). 8 disulfides stabilise this stretch: cysteine 74/cysteine 152, cysteine 91/cysteine 166, cysteine 147/cysteine 163, cysteine 185/cysteine 192, cysteine 188/cysteine 197, cysteine 201/cysteine 234, cysteine 210/cysteine 228, and cysteine 219/cysteine 232. The ShKT domain occupies 201 to 234; sequence CTLYNEYTNCDSLVKQSSCQDEWIKSKCPASCFC.

Expressed by the venom gland.

Its subcellular location is the secreted. Its function is as follows. Weakly blocks contraction of smooth muscle elicited by high potassium-induced depolarization, but does not block caffeine-stimulated contraction. May target voltage-gated calcium channels on smooth muscle. The polypeptide is Cysteine-rich venom protein ophanin (Ophiophagus hannah (King cobra)).